A 458-amino-acid polypeptide reads, in one-letter code: N-acetylgalactosamine kinase (458 aa).

Positions 43, 49, 50, and 52 each coordinate alpha-D-galactose. The ATP site is built by Gly143, Ser145, and Ser146. Asp190 serves as a coordination point for alpha-D-galactose. Asp190 acts as the Proton acceptor in catalysis. 2 residues coordinate ATP: Asn233 and Lys234.

The protein belongs to the GHMP kinase family. GalK subfamily. Monomer.

It carries out the reaction N-acetyl-alpha-D-galactosamine + ATP = N-acetyl-alpha-D-galactosamine 1-phosphate + ADP + H(+). Functionally, acts on GalNAc. Also acts as a galactokinase when galactose is present at high concentrations. The chain is N-acetylgalactosamine kinase (Galk2) from Mus musculus (Mouse).